The sequence spans 438 residues: Aspartyl protease 25 (438 aa).

Residues 1–23 (MAATTTIPLLLLLLAATVAAAAA) form the signal peptide. The Peptidase A1 domain occupies 79 to 433 (YVVRAGLGSP…DVANSRVGFA (355 aa)). D97 is a catalytic residue. An intrachain disulfide couples C107 to C113. N-linked (GlcNAc...) asparagine glycans are attached at residues N123, N193, and N282. D313 is an active-site residue. Residues C352 and C394 are joined by a disulfide bond.

Belongs to the peptidase A1 family.

In terms of biological role, anther-specific aspartic protease involved in tapetal programmed cell death (PCD). Directly regulated by the transcription factor EAT1/DTD in anthers during tapetum PCD and degeneration. The polypeptide is Aspartyl protease 25 (Oryza sativa subsp. japonica (Rice)).